A 155-amino-acid chain; its full sequence is Small ribosomal subunit protein uS7c (155 aa).

This sequence belongs to the universal ribosomal protein uS7 family. Part of the 30S ribosomal subunit.

It localises to the plastid. It is found in the chloroplast. Its function is as follows. One of the primary rRNA binding proteins, it binds directly to 16S rRNA where it nucleates assembly of the head domain of the 30S subunit. This is Small ribosomal subunit protein uS7c (rps7) from Allium textile (Textile onion).